Reading from the N-terminus, the 145-residue chain is tRNA-specific adenosine deaminase (145 aa).

The 116-residue stretch at 1-116 (MREALKQAEI…SNLRYFNSKA (116 aa)) folds into the CMP/dCMP-type deaminase domain. His48 lines the Zn(2+) pocket. Glu50 acts as the Proton donor in catalysis. Zn(2+)-binding residues include Cys78 and Cys81.

The protein belongs to the cytidine and deoxycytidylate deaminase family. In terms of assembly, homodimer. It depends on Zn(2+) as a cofactor.

The enzyme catalyses adenosine(34) in tRNA + H2O + H(+) = inosine(34) in tRNA + NH4(+). Its function is as follows. Catalyzes the deamination of adenosine to inosine at the wobble position 34 of tRNA(Arg2). The sequence is that of tRNA-specific adenosine deaminase from Rickettsia bellii (strain RML369-C).